The chain runs to 257 residues: Phosphonates import ATP-binding protein PhnC (257 aa).

The 245-residue stretch at Ile4–Ile248 folds into the ABC transporter domain. Gly37–Ser44 contacts ATP.

The protein belongs to the ABC transporter superfamily. Phosphonates importer (TC 3.A.1.9.1) family. In terms of assembly, the complex is composed of two ATP-binding proteins (PhnC), two transmembrane proteins (PhnE) and a solute-binding protein (PhnD).

The protein localises to the cell membrane. The catalysed reaction is phosphonate(out) + ATP + H2O = phosphonate(in) + ADP + phosphate + H(+). Its function is as follows. Part of the ABC transporter complex PhnCDE involved in phosphonates import. Responsible for energy coupling to the transport system. The polypeptide is Phosphonates import ATP-binding protein PhnC (Staphylococcus aureus (strain bovine RF122 / ET3-1)).